Here is a 568-residue protein sequence, read N- to C-terminus: MSTEASVASKWTRPDDFIKLQRLKQKKNKLAARVSNNNNRRPRHQVDETDKSKLLEAKLAQKRKNPFAKSTADAKKLRVDPQLADLEPVVTASSCFVRETPTRPAPAKFVLQKYDPQAFAKLFQHPQINAEDEDDAELAARQKHTAHLPVDWSLKTRARFFCPTELPAIQLKTSQLASGLTSFVRCMDPQRTESTLDISDATRFNQCNYYWQHPHLPWLTLYPRTAKENVGVVVGERERKALAEEWDFSFRGLFQLLRARQCPYFYLCANTFTVLFRAAGVGGRPESHALVTPSTRGMRQALRQEGIEFSMPLKSDNSGNAHDNSFNEESTTTSLGPEAGEDAPPPAQEDEDDDEDWLESLGVDERELRRIQSSHARKQQAAEMREDFSDNSLLLVDGVECQGFFSYLLNAKSAISTVGRLAGVPPTLLSPVAFPKATMQHLVPRSKKVRLDGVDYFSIDIKGLILPTFLPSVAELLSETRQMFSSTLASSINTLAFSKATQKLLETPETPQSDAEGEDAAGQVFGEQNLSECGLLPAVVGSICRTGQHAVGLLERVCYQRDEGYAWS.

2 disordered regions span residues 28-48 (NKLA…QVDE) and 311-355 (MPLK…DDDE). Over residues 315 to 335 (SDNSGNAHDNSFNEESTTTSL) the composition is skewed to polar residues.

The protein belongs to the DONSON family. As to expression, expression peaks during late G1 and S phase (at protein level).

It localises to the nucleus. Functionally, essential for DNA amplification in the ovary and required for cell proliferation during development. This Drosophila melanogaster (Fruit fly) protein is Protein downstream neighbor of son homolog (hd).